The primary structure comprises 506 residues: MNSQITLFFFFFSILSLSQISNSSSLLKPHPCPILPLPSSQQLQWQLGSMAMFLHFGPNTFTDSEWGTGKANPSIFNPTHLNASQWVQIAKDSGFSRVILTAKHHDGFCLWPSEYTDYSVKSSQWRNGAGDVVAELASAAKEAGIGLGLYLSPWDRHEQCYGKTLEYNEFYLSQMTELLTKYGEIKEVWLDGAKGDGEKDMEYFFDTWFSLIHQLQPKAVIFSDAGPDVRWIGDEAGLAGSTCWSLFNRTNAKIGDTEPSYSQEGDGYGQDWVPAECDVSIRPGWFWHASESPKPAVQLLDIYYNSVGRNCLFLLNVPPNSSGLISEQDIKVLEEFSEMKNSIFSNNLARKAFVNSSSIRGDQSSQFGPKNVLEEGLDKYWAPEENQNEWVLYLEFKDLVSFNVLEIREPIHMGQRIASFHLETRKTGSGEWERVVSGTTVGNKRLLRFLNVVESRSLKLVVDKARTDPLISYLGLYMDKFSGSSRNTTKITITRTLKEEQQLHDL.

The signal sequence occupies residues 1-23 (MNSQITLFFFFFSILSLSQISNS). N-linked (GlcNAc...) asparagine glycans are attached at residues Asn22, Asn82, Asn248, Asn320, Asn355, and Asn487.

Belongs to the glycosyl hydrolase 29 family.

The protein localises to the secreted. It localises to the extracellular space. Its subcellular location is the apoplast. It catalyses the reaction an alpha-L-fucoside + H2O = L-fucose + an alcohol. Hydrolyzes both 3- and 4-linked fucoses in Lewis determinants. Not active on neither 2-linked fucose nor on fucose in alpha-1,3-linkage to the innermost GlcNAc. The sequence is that of Alpha-L-fucosidase 1 (FUC1) from Arabidopsis thaliana (Mouse-ear cress).